We begin with the raw amino-acid sequence, 147 residues long: Hemoglobin subunit gamma (147 aa).

One can recognise a Globin domain in the interval 3 to 147; it reads HFTAEEKAAI…VANALAYKYH (145 aa). Heme b contacts are provided by H64 and H93.

Belongs to the globin family. As to quaternary structure, heterotetramer of two alpha chains and two gamma chains in fetal hemoglobin (Hb F). In terms of tissue distribution, red blood cells.

Gamma chains make up the fetal hemoglobin F, in combination with alpha chains. This Loxodonta africana (African elephant) protein is Hemoglobin subunit gamma (HBG).